Consider the following 114-residue polypeptide: Large ribosomal subunit protein bL20 (114 aa).

This sequence belongs to the bacterial ribosomal protein bL20 family.

Its function is as follows. Binds directly to 23S ribosomal RNA and is necessary for the in vitro assembly process of the 50S ribosomal subunit. It is not involved in the protein synthesizing functions of that subunit. This is Large ribosomal subunit protein bL20 from Parabacteroides distasonis (strain ATCC 8503 / DSM 20701 / CIP 104284 / JCM 5825 / NCTC 11152).